Consider the following 325-residue polypeptide: Tetraacyldisaccharide 4'-kinase (325 aa).

ATP is bound at residue 53–60; that stretch reads SVGGNGKT.

Belongs to the LpxK family.

It catalyses the reaction a lipid A disaccharide + ATP = a lipid IVA + ADP + H(+). Its pathway is glycolipid biosynthesis; lipid IV(A) biosynthesis; lipid IV(A) from (3R)-3-hydroxytetradecanoyl-[acyl-carrier-protein] and UDP-N-acetyl-alpha-D-glucosamine: step 6/6. In terms of biological role, transfers the gamma-phosphate of ATP to the 4'-position of a tetraacyldisaccharide 1-phosphate intermediate (termed DS-1-P) to form tetraacyldisaccharide 1,4'-bis-phosphate (lipid IVA). This chain is Tetraacyldisaccharide 4'-kinase, found in Pasteurella multocida (strain Pm70).